A 353-amino-acid chain; its full sequence is Dimethylsulfoniopropionate lyase 2 (353 aa).

Catalysis depends on proton donor/acceptor residues C125 and C274. Positions 326-353 are disordered; the sequence is DPNETDVSKGRPTKAEHRFGPEFEEMLQ. Residues 331-346 are compositionally biased toward basic and acidic residues; it reads DVSKGRPTKAEHRFGP.

This sequence belongs to the aspartate/glutamate racemases family. ALMA1 subfamily. Homotetramer.

The enzyme catalyses S,S-dimethyl-beta-propiothetin = acrylate + dimethyl sulfide + H(+). Its function is as follows. Mediates cleavage of dimethylsulfoniopropionate (DMSP) into dimethyl sulfide (DMS) and acrylate. DMS is the principal form by which sulfur is transported from oceans to the atmosphere and is a key component of the ocean sulfur cycle. This chain is Dimethylsulfoniopropionate lyase 2, found in Emiliania huxleyi (strain CCMP1516).